Consider the following 611-residue polypeptide: Protein decapping 5 (611 aa).

Positions 9–92 (KSSSAADSYV…IKDLQVKASP (84 aa)) constitute a Sm domain. Disordered regions lie at residues 111-153 (HYPS…AMPL), 183-238 (GLPQ…PSSL), 264-301 (SSSLQSTLQSAPSPSLASEMAPPLLSNKAPITAPPTLP), 318-362 (EAST…DKPK), 396-455 (QVSS…AGRS), and 519-611 (FFDS…NRTT). Polar residues-rich tracts occupy residues 117 to 140 (PTSGSLPSTASGSLPDISSHNGQP) and 203 to 214 (NSLQQPLQYPNF). The segment covering 264–281 (SSSLQSTLQSAPSPSLAS) has biased composition (low complexity). 3 stretches are compositionally biased toward polar residues: residues 318–330 (EASTGLPLSNKPS), 396–413 (QVSSSAGLEQSVPVTSEA), and 424–437 (ARPTQKPNGHSFPN). Over residues 441-453 (YRGRGRGRGRGAG) the composition is skewed to basic residues. Residues 453–489 (GRSHQVMKFTEDFDFTAMNEKFNKDEVWGHLGKSTTL) form the DFDF domain. An FFD box motif is present at residues 512–527 (PVYNKDDFFDSLSSNT). Residues 528 to 547 (IDRESQNSRPRFSEQRKLDT) show a composition bias toward basic and acidic residues. The TFG box signature appears at 534-554 (NSRPRFSEQRKLDTETFGEFS). Positions 559 to 604 (GRGGRGGYGRNNGYSRGGYGGRGYGGYGGRGGGGGGYGYGGRGQGR) are enriched in gly residues.

This sequence belongs to the LSM14 family. In terms of assembly, homodimer. Component of the decapping complex. Interacts with DCP1 and DCP2.

The protein resides in the cytoplasm. The protein localises to the P-body. Functionally, as a component of the decapping complex, involved in the degradation of mRNAs. Promotes P-body formation. Translational repressor. This chain is Protein decapping 5 (DCP5), found in Arabidopsis thaliana (Mouse-ear cress).